A 447-amino-acid polypeptide reads, in one-letter code: Pentatricopeptide repeat-containing protein At3g53170 (447 aa).

PPR repeat units follow at residues 93–127 (RCKT…GLKP), 128–158 (TIDV…MKSV), 164–198 (DVFT…GVGC), 199–233 (STVT…GDSL), 235–269 (DVCT…GVQP), 270–304 (DITT…FFSL), 305–339 (TTVT…GVKP), 340–374 (NSIT…DVVL), 375–409 (DTPF…KCKP), and 410–444 (DKIT…GENL).

This sequence belongs to the PPR family. P subfamily.

This Arabidopsis thaliana (Mouse-ear cress) protein is Pentatricopeptide repeat-containing protein At3g53170.